Consider the following 257-residue polypeptide: BTB/POZ domain-containing protein KCTD1 (257 aa).

The segment at 1-25 (MSRPLITRSPASPLNNQGIPTPAQL) is disordered. Phosphoserine occurs at positions 9 and 12. Residues 9–25 (SPASPLNNQGIPTPAQL) show a composition bias toward polar residues. The BTB domain occupies 30-100 (APVHIDVGGH…LRTSKLLIPD (71 aa)).

Forms homopentamers. Interacts with KCTD15, probably forming heteropentamers depending on its abundance in a cell-type dependent manner. Interacts with TFAP2A, TFAP2B and TFAP2C via the BTB domain. In terms of processing, sumoylated.

Its subcellular location is the nucleus. In terms of biological role, may repress the transcriptional activity of AP-2 family members, including TFAP2A, TFAP2B and TFAP2C to various extent. The chain is BTB/POZ domain-containing protein KCTD1 (KCTD1) from Bos taurus (Bovine).